An 87-amino-acid polypeptide reads, in one-letter code: Small ribosomal subunit protein bS20 (87 aa).

This sequence belongs to the bacterial ribosomal protein bS20 family.

Its function is as follows. Binds directly to 16S ribosomal RNA. This chain is Small ribosomal subunit protein bS20, found in Beijerinckia indica subsp. indica (strain ATCC 9039 / DSM 1715 / NCIMB 8712).